We begin with the raw amino-acid sequence, 215 residues long: MSSLPALDIFLSDYQQAYLDTLGEHPRYYAQQQASECIVGDVDVETEEALQWKSVVRVDTGRFDNVEHALELSLHGDINAFYGSHFAASLMFDSQWGTGELLQAWSQSDFEHLQQNMIGHLMMKKKLKQEPTWFIGVFDDEDKMITVNNADGSVWIEIAGQAQSVKLADSLNSFISEVSPRVAPPVKLVEEVIPAYDHPGIWQRMKIMWRNLLGK.

It belongs to the Syd family.

It localises to the cell inner membrane. In terms of biological role, interacts with the SecY protein in vivo. May bind preferentially to an uncomplexed state of SecY, thus functioning either as a chelating agent for excess SecY in the cell or as a regulatory factor that negatively controls the translocase function. This chain is Protein Syd, found in Shewanella piezotolerans (strain WP3 / JCM 13877).